The sequence spans 75 residues: Toxin-like peptide AaF1CA7 (75 aa).

The N-terminal stretch at 1 to 22 is a signal peptide; sequence MMKLMLFSIIVILFSLIGSIHG. The LCN-type CS-alpha/beta domain maps to 25-75; it reads VPGNYPLDSSDDTYLCAPLGENPSCIQICRKHGVKYGYCYAFQCWCEYFGR. 3 disulfide bridges follow: Cys-40/Cys-63, Cys-49/Cys-68, and Cys-53/Cys-70.

This sequence belongs to the long (3 C-C) scorpion toxin superfamily. Expressed by the venom gland.

The protein resides in the secreted. Its function is as follows. Probable neurotoxin that inhibits ion channels. This is Toxin-like peptide AaF1CA7 from Androctonus australis (Sahara scorpion).